Here is a 118-residue protein sequence, read N- to C-terminus: Large ribosomal subunit protein uL24 (118 aa).

This sequence belongs to the universal ribosomal protein uL24 family. In terms of assembly, part of the 50S ribosomal subunit.

Its function is as follows. One of two assembly initiator proteins, it binds directly to the 5'-end of the 23S rRNA, where it nucleates assembly of the 50S subunit. One of the proteins that surrounds the polypeptide exit tunnel on the outside of the subunit. The polypeptide is Large ribosomal subunit protein uL24 (Synechococcus sp. (strain CC9605)).